We begin with the raw amino-acid sequence, 601 residues long: Elongation factor 4 (601 aa).

A tr-type G domain is found at 7–189 (SNVRNFSIVA…AIVTRLPPPK (183 aa)). GTP-binding positions include 19-24 (DHGKST) and 136-139 (NKVD).

The protein belongs to the TRAFAC class translation factor GTPase superfamily. Classic translation factor GTPase family. LepA subfamily.

The protein localises to the cell inner membrane. The enzyme catalyses GTP + H2O = GDP + phosphate + H(+). In terms of biological role, required for accurate and efficient protein synthesis under certain stress conditions. May act as a fidelity factor of the translation reaction, by catalyzing a one-codon backward translocation of tRNAs on improperly translocated ribosomes. Back-translocation proceeds from a post-translocation (POST) complex to a pre-translocation (PRE) complex, thus giving elongation factor G a second chance to translocate the tRNAs correctly. Binds to ribosomes in a GTP-dependent manner. In Afipia carboxidovorans (strain ATCC 49405 / DSM 1227 / KCTC 32145 / OM5) (Oligotropha carboxidovorans), this protein is Elongation factor 4.